A 459-amino-acid polypeptide reads, in one-letter code: Bifunctional protein GlmU (459 aa).

Residues 1-230 form a pyrophosphorylase region; sequence MSNRFAVILA…FDETLGVNDR (230 aa). UDP-N-acetyl-alpha-D-glucosamine is bound by residues 9–12, Lys-23, Gln-73, and 78–79; these read LAAG and GT. Asp-103 provides a ligand contact to Mg(2+). Positions 140, 155, 170, and 228 each coordinate UDP-N-acetyl-alpha-D-glucosamine. Asn-228 contacts Mg(2+). Positions 231–251 are linker; sequence VALSQAEIIMKNRINRKNMVN. The N-acetyltransferase stretch occupies residues 252-459; sequence GVTIIDPSNT…VDQLLNKKKS (208 aa). Residues Arg-333 and Lys-351 each coordinate UDP-N-acetyl-alpha-D-glucosamine. The Proton acceptor role is filled by His-363. Residues Tyr-366 and Asn-377 each coordinate UDP-N-acetyl-alpha-D-glucosamine. Acetyl-CoA-binding positions include 386–387, Ala-423, and Arg-440; that span reads NY.

It in the N-terminal section; belongs to the N-acetylglucosamine-1-phosphate uridyltransferase family. This sequence in the C-terminal section; belongs to the transferase hexapeptide repeat family. As to quaternary structure, homotrimer. Mg(2+) is required as a cofactor.

It is found in the cytoplasm. The enzyme catalyses alpha-D-glucosamine 1-phosphate + acetyl-CoA = N-acetyl-alpha-D-glucosamine 1-phosphate + CoA + H(+). The catalysed reaction is N-acetyl-alpha-D-glucosamine 1-phosphate + UTP + H(+) = UDP-N-acetyl-alpha-D-glucosamine + diphosphate. It functions in the pathway nucleotide-sugar biosynthesis; UDP-N-acetyl-alpha-D-glucosamine biosynthesis; N-acetyl-alpha-D-glucosamine 1-phosphate from alpha-D-glucosamine 6-phosphate (route II): step 2/2. The protein operates within nucleotide-sugar biosynthesis; UDP-N-acetyl-alpha-D-glucosamine biosynthesis; UDP-N-acetyl-alpha-D-glucosamine from N-acetyl-alpha-D-glucosamine 1-phosphate: step 1/1. It participates in bacterial outer membrane biogenesis; LPS lipid A biosynthesis. In terms of biological role, catalyzes the last two sequential reactions in the de novo biosynthetic pathway for UDP-N-acetylglucosamine (UDP-GlcNAc). The C-terminal domain catalyzes the transfer of acetyl group from acetyl coenzyme A to glucosamine-1-phosphate (GlcN-1-P) to produce N-acetylglucosamine-1-phosphate (GlcNAc-1-P), which is converted into UDP-GlcNAc by the transfer of uridine 5-monophosphate (from uridine 5-triphosphate), a reaction catalyzed by the N-terminal domain. This Bacillus cereus (strain ATCC 14579 / DSM 31 / CCUG 7414 / JCM 2152 / NBRC 15305 / NCIMB 9373 / NCTC 2599 / NRRL B-3711) protein is Bifunctional protein GlmU.